A 436-amino-acid chain; its full sequence is MTLKKLSYRLAAASALSFFVTSNAFAATEIQWWHAMTGANNEVVDTLAKEFNDSQKDYKITPVFKGTYPETLNAGIAAFRAKQPPAIIQVFDAGSGVMMGAAGAIKPVADVLKEGGYTFNKDEYLAGIVAYYSKPDGTMLSFPYNSSSPILYYNKDIFQKAGLDAANPPKTWPEVFEAAKKIKTSGAAQCGFTSTWLTWIQTENFAAWNNVSYGSNENGLGGTDVKLAVNAPLFVEHFQAIADLAKDGTFRYGGRTSEAKQLFMSGECGILTESSGGLGDIVKTGMNYGIGQLPYYEGHGPQNTIPGGASLWVFGGKSDAEYKGVAEFFHFLSQTKIQSRLHQVSGYMPVTIAAYEETKKSGFYDKNPARETPLLQMMGKPPTENSKGVRLVNLPQVRDIMNEEFEAMLAGKQDAKAALDKIVERGDAAIKQAAGN.

The first 26 residues, 1 to 26, serve as a signal peptide directing secretion; sequence MTLKKLSYRLAAASALSFFVTSNAFA. Sn-glycerol 3-phosphate is bound by residues Tyr-68, Asp-92, Ser-147, Ser-274, Gly-308, Tyr-347, and Arg-398.

It belongs to the bacterial solute-binding protein 1 family. The complex is composed of two ATP-binding proteins (UgpC), two transmembrane proteins (UgpA and UgpE) and a solute-binding protein (UgpB).

It localises to the periplasm. In terms of biological role, part of the ABC transporter complex UgpBAEC involved in sn-glycerol-3-phosphate (G3P) import. Binds G3P. The chain is sn-glycerol-3-phosphate-binding periplasmic protein UgpB (ugpB) from Agrobacterium fabrum (strain C58 / ATCC 33970) (Agrobacterium tumefaciens (strain C58)).